Here is a 399-residue protein sequence, read N- to C-terminus: Argininosuccinate synthase (399 aa).

Residue 12-20 (AFSGGLDTS) coordinates ATP. An L-citrulline-binding site is contributed by Tyr-90. Gly-120 provides a ligand contact to ATP. L-aspartate-binding residues include Thr-122, Asn-126, and Asp-127. Asn-126 is a binding site for L-citrulline. The L-citrulline site is built by Arg-130, Ser-175, Glu-260, and Tyr-272.

Belongs to the argininosuccinate synthase family. Type 1 subfamily. In terms of assembly, homotetramer.

It is found in the cytoplasm. The enzyme catalyses L-citrulline + L-aspartate + ATP = 2-(N(omega)-L-arginino)succinate + AMP + diphosphate + H(+). Its pathway is amino-acid biosynthesis; L-arginine biosynthesis; L-arginine from L-ornithine and carbamoyl phosphate: step 2/3. This chain is Argininosuccinate synthase, found in Methanothermobacter thermautotrophicus (strain ATCC 29096 / DSM 1053 / JCM 10044 / NBRC 100330 / Delta H) (Methanobacterium thermoautotrophicum).